A 140-amino-acid polypeptide reads, in one-letter code: uncharacterized protein (140 aa).

Positions 3–131 (RLDHIGIAVF…NGVLVELCEP (129 aa)) constitute a VOC domain. Positions 6, 53, 77, and 127 each coordinate a divalent metal cation.

The protein belongs to the methylmalonyl-CoA epimerase family.

This is an uncharacterized protein from Bacillus subtilis (strain 168).